Reading from the N-terminus, the 458-residue chain is Elongation factor 1-alpha (458 aa).

Position 2 is a n,N,N-trimethylglycine (Gly2). Lys3 bears the N6,N6-dimethyllysine; alternate mark. Lys3 carries the post-translational modification N6-methyllysine; alternate. One can recognise a tr-type G domain in the interval 5–240; that stretch reads KTHVNVVVIG…DAIDPPQRPS (236 aa). A G1 region spans residues 14 to 21; it reads GHVDSGKS. 14 to 21 contacts GTP; sequence GHVDSGKS. Lys30 is modified (N6-methyllysine). The interval 70–74 is G2; sequence GITID. Residue Lys79 is modified to N6,N6,N6-trimethyllysine. The G3 stretch occupies residues 91-94; that stretch reads DAPG. GTP is bound by residues 91 to 95 and 153 to 156; these read DAPGH and NKMD. The segment at 153-156 is G4; that stretch reads NKMD. Residues 192-194 form a G5 region; that stretch reads SGW. N6,N6-dimethyllysine; alternate is present on Lys316. Residue Lys316 is modified to N6-methyllysine; alternate. Lys390 is modified (N6-methyllysine).

It belongs to the TRAFAC class translation factor GTPase superfamily. Classic translation factor GTPase family. EF-Tu/EF-1A subfamily.

It is found in the cytoplasm. This protein promotes the GTP-dependent binding of aminoacyl-tRNA to the A-site of ribosomes during protein biosynthesis. The sequence is that of Elongation factor 1-alpha (TEF-1) from Absidia glauca (Pin mould).